The primary structure comprises 71 residues: UPF0346 protein SUB0487 (71 aa).

The protein belongs to the UPF0346 family.

The polypeptide is UPF0346 protein SUB0487 (Streptococcus uberis (strain ATCC BAA-854 / 0140J)).